Consider the following 443-residue polypeptide: 3-phosphoshikimate 1-carboxyvinyltransferase (443 aa).

Lys24, Ser25, and Arg29 together coordinate 3-phosphoshikimate. Lys24 serves as a coordination point for phosphoenolpyruvate. Residues Gly95 and Arg123 each coordinate phosphoenolpyruvate. 3-phosphoshikimate contacts are provided by Ser167, Gln169, Asp323, and Lys350. Residue Gln169 coordinates phosphoenolpyruvate. Asp323 serves as the catalytic Proton acceptor. Residues Arg354 and Arg398 each contribute to the phosphoenolpyruvate site.

Belongs to the EPSP synthase family. As to quaternary structure, monomer.

The protein resides in the cytoplasm. The enzyme catalyses 3-phosphoshikimate + phosphoenolpyruvate = 5-O-(1-carboxyvinyl)-3-phosphoshikimate + phosphate. Its pathway is metabolic intermediate biosynthesis; chorismate biosynthesis; chorismate from D-erythrose 4-phosphate and phosphoenolpyruvate: step 6/7. Catalyzes the transfer of the enolpyruvyl moiety of phosphoenolpyruvate (PEP) to the 5-hydroxyl of shikimate-3-phosphate (S3P) to produce enolpyruvyl shikimate-3-phosphate and inorganic phosphate. The polypeptide is 3-phosphoshikimate 1-carboxyvinyltransferase (Caulobacter vibrioides (strain ATCC 19089 / CIP 103742 / CB 15) (Caulobacter crescentus)).